The primary structure comprises 1925 residues: Plexin-D1 (1925 aa).

A compositionally biased stretch (low complexity) spans 1-21 (MARRAAGGAPPSARAAAAVPL). The segment at 1 to 26 (MARRAAGGAPPSARAAAAVPLRPRPH) is disordered. The first 48 residues, 1-48 (MARRAAGGAPPSARAAAAVPLRPRPHSRGPGLLPLPLLLLLGAARAGA), serve as a signal peptide directing secretion. The Sema domain maps to 49–548 (LEIQRRFPSP…TSHQMARVKV (500 aa)). At 49–1271 (LEIQRRFPSP…TLQLGGSETA (1223 aa)) the chain is on the extracellular side. Disulfide bonds link C106/C116 and C142/C150. N-linked (GlcNAc...) asparagine glycosylation is found at N157 and N226. Cystine bridges form between C324-C447 and C347-C391. Residue N483 is glycosylated (N-linked (GlcNAc...) asparagine). Disulfide bonds link C551/C568, C557/C602, C560/C577, C571/C583, and C639/C663. 3 IPT/TIG domains span residues 893–977 (PEIR…SREQ), 983–1065 (PTVH…NLTF), and 1071–1145 (PVIT…FING). N967 carries N-linked (GlcNAc...) asparagine glycosylation. A glycan (N-linked (GlcNAc...) asparagine) is linked at N1120. A helical transmembrane segment spans residues 1272-1292 (IVVSIVICSVLLLLSVVALFV). Residues 1293–1925 (FCTKSRRAER…NNIYECYSEA (633 aa)) are Cytoplasmic-facing.

It belongs to the plexin family. In terms of assembly, interacts with NRP1 and SEMA4A. Interacts with SH3BP1; they dissociate upon SEMA3E binding to PLXND1 allowing SH3BP1 to transduce downstream signal through RAC1 inactivation. As to expression, detected in embryonic heart and vascular endothelium, brain, dorsal root ganglia, adrenal gland, lung mesenchyme, small intestine and in the ossification centers of vertebral bodies.

The protein resides in the cell membrane. The protein localises to the cell projection. It localises to the lamellipodium membrane. Cell surface receptor for SEMA4A and for class 3 semaphorins, such as SEMA3A, SEMA3C and SEMA3E. Plays an important role in cell-cell signaling, and in regulating the migration of a wide spectrum of cell types. Regulates the migration of thymocytes in the medulla. Regulates endothelial cell migration. Plays an important role in ensuring the specificity of synapse formation. Mediates anti-angiogenic signaling in response to SEMA3E. Required for normal development of the heart and vasculature. This chain is Plexin-D1 (Plxnd1), found in Mus musculus (Mouse).